The primary structure comprises 202 residues: Imidazoleglycerol-phosphate dehydratase (202 aa).

The protein belongs to the imidazoleglycerol-phosphate dehydratase family.

The protein localises to the cytoplasm. The catalysed reaction is D-erythro-1-(imidazol-4-yl)glycerol 3-phosphate = 3-(imidazol-4-yl)-2-oxopropyl phosphate + H2O. Its pathway is amino-acid biosynthesis; L-histidine biosynthesis; L-histidine from 5-phospho-alpha-D-ribose 1-diphosphate: step 6/9. The polypeptide is Imidazoleglycerol-phosphate dehydratase (Corynebacterium diphtheriae (strain ATCC 700971 / NCTC 13129 / Biotype gravis)).